Here is a 704-residue protein sequence, read N- to C-terminus: Polyribonucleotide nucleotidyltransferase (704 aa).

Asp488 and Asp494 together coordinate Mg(2+). Positions Pro555–Ile614 constitute a KH domain. Positions Gly624–Lys692 constitute an S1 motif domain.

It belongs to the polyribonucleotide nucleotidyltransferase family. Component of the RNA degradosome, which is a multiprotein complex involved in RNA processing and mRNA degradation. The cofactor is Mg(2+).

Its subcellular location is the cytoplasm. It catalyses the reaction RNA(n+1) + phosphate = RNA(n) + a ribonucleoside 5'-diphosphate. Involved in mRNA degradation. Catalyzes the phosphorolysis of single-stranded polyribonucleotides processively in the 3'- to 5'-direction. The protein is Polyribonucleotide nucleotidyltransferase of Shewanella halifaxensis (strain HAW-EB4).